A 246-amino-acid polypeptide reads, in one-letter code: UDP-N-acetyl-D-mannosaminuronic acid transferase (246 aa).

The protein belongs to the glycosyltransferase 26 family.

The catalysed reaction is UDP-N-acetyl-alpha-D-mannosaminouronate + N-acetyl-alpha-D-glucosaminyl-di-trans,octa-cis-undecaprenyl diphosphate = beta-D-ManNAcA-(1-&gt;4)-alpha-D-GlcNAc-di-trans,octa-cis-undecaprenyl diphosphate + UDP + H(+). Its pathway is bacterial outer membrane biogenesis; enterobacterial common antigen biosynthesis. In terms of biological role, catalyzes the synthesis of Und-PP-GlcNAc-ManNAcA (Lipid II), the second lipid-linked intermediate involved in enterobacterial common antigen (ECA) synthesis. The protein is UDP-N-acetyl-D-mannosaminuronic acid transferase of Escherichia coli O1:K1 / APEC.